The following is a 54-amino-acid chain: Conotoxin vc5a (54 aa).

The first 14 residues, Val-1–Ala-14, serve as a signal peptide directing secretion. Positions Arg-15–Thr-42 are excised as a propeptide. Pro-49 is subject to 4-hydroxyproline. Ile-53 carries the isoleucine amide modification.

This sequence belongs to the conotoxin T superfamily. Contains 2 disulfide bonds that can be either 'C1-C3, C2-C4' or 'C1-C4, C2-C3', since these disulfide connectivities have been observed for conotoxins with cysteine framework V (for examples, see AC P0DQQ7 and AC P81755). As to expression, expressed by the venom duct.

The protein localises to the secreted. This Conus victoriae (Queen Victoria cone) protein is Conotoxin vc5a.